Reading from the N-terminus, the 342-residue chain is MAEIYYDNDADLSIIQGKKVAVIGYGSQGHAHAQNLRDSGVEVVIGLKDGSKSTPKAEEAGFRVLSAAEAAQWADVVVILAPDQVQRTLYADDIRANLEAGNALVFGHGFNIRFGYIEAPEGVDVIMVAPKGPGHTVRREYEAGRGVPVIVAVEKDATGAAWPLVLSYAKGIGGLRAGGIKTTFTEETETDLFGEQAVLCGGVSQLVQYGFETLTEAGYQPQVAYFEVLHELKLIVDLMWEGGIAKQRWSVSDTAEYGDYVSGPRVIGPHVKENMKAVLSDIQDGTFAKRFIADQDAGAPEFLALRVKGEQHPIEATGRELRKLFAWNASNDDDYVDGEVAR.

The 181-residue stretch at 2–182 folds into the KARI N-terminal Rossmann domain; the sequence is AEIYYDNDAD…GGLRAGGIKT (181 aa). NADP(+)-binding positions include 25–28, Lys48, Ser51, Ser53, and 83–86; these read YGSQ and DQVQ. His108 is a catalytic residue. Gly134 contributes to the NADP(+) binding site. The KARI C-terminal knotted domain maps to 183–328; it reads TFTEETETDL…RELRKLFAWN (146 aa). 4 residues coordinate Mg(2+): Asp191, Glu195, Glu227, and Glu231. Ser252 lines the substrate pocket.

This sequence belongs to the ketol-acid reductoisomerase family. Requires Mg(2+) as cofactor.

The catalysed reaction is (2R)-2,3-dihydroxy-3-methylbutanoate + NADP(+) = (2S)-2-acetolactate + NADPH + H(+). It catalyses the reaction (2R,3R)-2,3-dihydroxy-3-methylpentanoate + NADP(+) = (S)-2-ethyl-2-hydroxy-3-oxobutanoate + NADPH + H(+). It functions in the pathway amino-acid biosynthesis; L-isoleucine biosynthesis; L-isoleucine from 2-oxobutanoate: step 2/4. The protein operates within amino-acid biosynthesis; L-valine biosynthesis; L-valine from pyruvate: step 2/4. Its function is as follows. Involved in the biosynthesis of branched-chain amino acids (BCAA). Catalyzes an alkyl-migration followed by a ketol-acid reduction of (S)-2-acetolactate (S2AL) to yield (R)-2,3-dihydroxy-isovalerate. In the isomerase reaction, S2AL is rearranged via a Mg-dependent methyl migration to produce 3-hydroxy-3-methyl-2-ketobutyrate (HMKB). In the reductase reaction, this 2-ketoacid undergoes a metal-dependent reduction by NADPH to yield (R)-2,3-dihydroxy-isovalerate. This Leifsonia xyli subsp. xyli (strain CTCB07) protein is Ketol-acid reductoisomerase (NADP(+)).